The following is a 509-amino-acid chain: Pyruvate kinase (509 aa).

The residue at position 29 (Ser-29) is a Phosphoserine. Residue Arg-56 participates in substrate binding. Residues Asn-58 and Ser-60 each coordinate K(+). 58–61 (NFSH) contacts ATP. Residue Ser-63 is modified to Phosphoserine. 2 residues coordinate K(+): Asp-91 and Thr-92. Positions 98 and 184 each coordinate ATP. Glu-249 contacts Mg(2+). Gly-272 and Asp-273 together coordinate substrate. A Mg(2+)-binding site is contributed by Asp-273. Ser-281 carries the phosphoserine modification. Thr-305 serves as a coordination point for substrate. Ser-412 is modified (phosphoserine).

It belongs to the pyruvate kinase family. Homotetramer. It depends on Mg(2+) as a cofactor. The cofactor is K(+).

The catalysed reaction is pyruvate + ATP = phosphoenolpyruvate + ADP + H(+). It participates in carbohydrate degradation; glycolysis; pyruvate from D-glyceraldehyde 3-phosphate: step 5/5. This is Pyruvate kinase (pyk1) from Schizosaccharomyces pombe (strain 972 / ATCC 24843) (Fission yeast).